The primary structure comprises 420 residues: Type II methyltransferase M.HgiCI (420 aa).

The 416-residue stretch at 2 to 417 (LKFIDLFAGI…LDLFKSADLA (416 aa)) folds into the SAM-dependent MTase C5-type domain. Cys75 is an active-site residue.

Belongs to the class I-like SAM-binding methyltransferase superfamily. C5-methyltransferase family.

It catalyses the reaction a 2'-deoxycytidine in DNA + S-adenosyl-L-methionine = a 5-methyl-2'-deoxycytidine in DNA + S-adenosyl-L-homocysteine + H(+). In terms of biological role, a methylase that recognizes the double-stranded sequence 5'-GGYRCC-3', methylates C-5 on both strands, and protects the DNA from cleavage by the HgiCI endonuclease. This is Type II methyltransferase M.HgiCI (hgiCIM) from Herpetosiphon aurantiacus (Herpetosiphon giganteus).